The chain runs to 149 residues: Large ribosomal subunit protein uL15 (149 aa).

The segment at 30–63 is disordered; it reads GLGKTAGRGHKGSFARKGGGKIKPGFEGGQTPMQ. Residues 36–49 are compositionally biased toward basic residues; it reads GRGHKGSFARKGGG.

Belongs to the universal ribosomal protein uL15 family. Part of the 50S ribosomal subunit.

Its function is as follows. Binds to the 23S rRNA. The polypeptide is Large ribosomal subunit protein uL15 (Xylella fastidiosa (strain 9a5c)).